The chain runs to 197 residues: Phosphoheptose isomerase (197 aa).

Residues 36 to 197 (MTASLMNNGK…IDCLLLGVEE (162 aa)) enclose the SIS domain. 51–53 (NGG) is a substrate binding site. Zn(2+) contacts are provided by His-60 and Glu-64. Residues Glu-64, 93 to 94 (ND), 119 to 121 (STS), Ser-124, and Gln-174 each bind substrate. Zn(2+)-binding residues include Gln-174 and His-182.

This sequence belongs to the SIS family. GmhA subfamily. Homotetramer. The cofactor is Zn(2+).

It is found in the cytoplasm. It catalyses the reaction 2 D-sedoheptulose 7-phosphate = D-glycero-alpha-D-manno-heptose 7-phosphate + D-glycero-beta-D-manno-heptose 7-phosphate. It participates in carbohydrate biosynthesis; D-glycero-D-manno-heptose 7-phosphate biosynthesis; D-glycero-alpha-D-manno-heptose 7-phosphate and D-glycero-beta-D-manno-heptose 7-phosphate from sedoheptulose 7-phosphate: step 1/1. In terms of biological role, catalyzes the isomerization of sedoheptulose 7-phosphate in D-glycero-D-manno-heptose 7-phosphate. This Azoarcus sp. (strain BH72) protein is Phosphoheptose isomerase.